The primary structure comprises 90 residues: UPF0367 protein SYNPCC7002_A0153 (90 aa).

The protein belongs to the UPF0367 family.

This Picosynechococcus sp. (strain ATCC 27264 / PCC 7002 / PR-6) (Agmenellum quadruplicatum) protein is UPF0367 protein SYNPCC7002_A0153.